The following is a 131-amino-acid chain: Sec-independent protein translocase protein TatB (131 aa).

The helical transmembrane segment at 2-22 threads the bilayer; it reads FDGIGFMELLLIGVLGLVVLG. Residues 69-131 form a disordered region; the sequence is NQGLKNLAPE…ENAKSDKPNG (63 aa). Positions 105-123 are enriched in low complexity; that stretch reads AKETPAKETATTETTSTEN.

The protein belongs to the TatB family. As to quaternary structure, the Tat system comprises two distinct complexes: a TatABC complex, containing multiple copies of TatA, TatB and TatC subunits, and a separate TatA complex, containing only TatA subunits. Substrates initially bind to the TatABC complex, which probably triggers association of the separate TatA complex to form the active translocon.

Its subcellular location is the cell inner membrane. Its function is as follows. Part of the twin-arginine translocation (Tat) system that transports large folded proteins containing a characteristic twin-arginine motif in their signal peptide across membranes. Together with TatC, TatB is part of a receptor directly interacting with Tat signal peptides. TatB may form an oligomeric binding site that transiently accommodates folded Tat precursor proteins before their translocation. The polypeptide is Sec-independent protein translocase protein TatB (Shewanella piezotolerans (strain WP3 / JCM 13877)).